The sequence spans 76 residues: TP53-regulated inhibitor of apoptosis 1 (76 aa).

The residue at position 1 (M1) is an N-acetylmethionine. A coiled-coil region spans residues 1–52; the sequence is MNSVGEACTDMKREYDQCFNRWFAEKFLKGDSSGDPCTDLFKRYQQCVQKAI. One can recognise a CHCH domain in the interval 5–55; that stretch reads GEACTDMKREYDQCFNRWFAEKFLKGDSSGDPCTDLFKRYQQCVQKAIKEK. 2 short sequence motifs (cx9C motif) span residues 8–18 and 37–47; these read CTDMKREYDQC and CTDLFKRYQQC. 2 cysteine pairs are disulfide-bonded: C8–C47 and C18–C37.

This sequence belongs to the TRIAP1/MDM35 family. As to quaternary structure, monomer. Interacts with APAF1 and HSP70. Forms a complex with PRELID1 in the mitochondrion intermembrane space. Interacts with PRELID3A.

It is found in the mitochondrion. It localises to the mitochondrion intermembrane space. It catalyses the reaction a 1,2-diacyl-sn-glycero-3-phosphate(in) = a 1,2-diacyl-sn-glycero-3-phosphate(out). Its function is as follows. Involved in the modulation of the mitochondrial apoptotic pathway by ensuring the accumulation of cardiolipin (CL) in mitochondrial membranes. In vitro, the TRIAP1:PRELID1 complex mediates the transfer of phosphatidic acid (PA) between liposomes and probably functions as a PA transporter across the mitochondrion intermembrane space to provide PA for CL synthesis in the inner membrane. Likewise, the TRIAP1:PRELID3A complex mediates the transfer of phosphatidic acid (PA) between liposomes (in vitro) and probably functions as a PA transporter across the mitochondrion intermembrane space (in vivo). Mediates cell survival by inhibiting activation of caspase-9 which prevents induction of apoptosis. The chain is TP53-regulated inhibitor of apoptosis 1 (TRIAP1) from Homo sapiens (Human).